The primary structure comprises 393 residues: tRNA(Met) cytidine acetate ligase (393 aa).

3 residues coordinate ATP: Gly81, Asn142, and Arg167.

The protein belongs to the TmcAL family.

Its subcellular location is the cytoplasm. The enzyme catalyses cytidine(34) in elongator tRNA(Met) + acetate + ATP = N(4)-acetylcytidine(34) in elongator tRNA(Met) + AMP + diphosphate. In terms of biological role, catalyzes the formation of N(4)-acetylcytidine (ac(4)C) at the wobble position of elongator tRNA(Met), using acetate and ATP as substrates. First activates an acetate ion to form acetyladenylate (Ac-AMP) and then transfers the acetyl group to tRNA to form ac(4)C34. The chain is tRNA(Met) cytidine acetate ligase from Bacillus cereus (strain ATCC 14579 / DSM 31 / CCUG 7414 / JCM 2152 / NBRC 15305 / NCIMB 9373 / NCTC 2599 / NRRL B-3711).